The primary structure comprises 386 residues: Chaperone protein DnaJ (386 aa).

Residues 5–69 form the J domain; that stretch reads DLYDVLGVKK…QKRAQYDQFG (65 aa). A CR-type zinc finger spans residues 140-224; the sequence is GKETSIKYNR…CHGAGVTEER (85 aa). The Zn(2+) site is built by Cys153, Cys156, Cys170, Cys173, Cys196, Cys199, Cys212, and Cys215. 4 CXXCXGXG motif repeats span residues 153-160, 170-177, 196-203, and 212-219; these read CHTCHGSG, CSTCHGQG, CPTCGGKG, and CDTCHGAG.

It belongs to the DnaJ family. As to quaternary structure, homodimer. Requires Zn(2+) as cofactor.

It localises to the cytoplasm. Functionally, participates actively in the response to hyperosmotic and heat shock by preventing the aggregation of stress-denatured proteins and by disaggregating proteins, also in an autonomous, DnaK-independent fashion. Unfolded proteins bind initially to DnaJ; upon interaction with the DnaJ-bound protein, DnaK hydrolyzes its bound ATP, resulting in the formation of a stable complex. GrpE releases ADP from DnaK; ATP binding to DnaK triggers the release of the substrate protein, thus completing the reaction cycle. Several rounds of ATP-dependent interactions between DnaJ, DnaK and GrpE are required for fully efficient folding. Also involved, together with DnaK and GrpE, in the DNA replication of plasmids through activation of initiation proteins. This is Chaperone protein DnaJ from Limosilactobacillus fermentum (strain NBRC 3956 / LMG 18251) (Lactobacillus fermentum).